We begin with the raw amino-acid sequence, 95 residues long: Aspartyl/glutamyl-tRNA(Asn/Gln) amidotransferase subunit C (95 aa).

It belongs to the GatC family. In terms of assembly, heterotrimer of A, B and C subunits.

The catalysed reaction is L-glutamyl-tRNA(Gln) + L-glutamine + ATP + H2O = L-glutaminyl-tRNA(Gln) + L-glutamate + ADP + phosphate + H(+). It catalyses the reaction L-aspartyl-tRNA(Asn) + L-glutamine + ATP + H2O = L-asparaginyl-tRNA(Asn) + L-glutamate + ADP + phosphate + 2 H(+). Allows the formation of correctly charged Asn-tRNA(Asn) or Gln-tRNA(Gln) through the transamidation of misacylated Asp-tRNA(Asn) or Glu-tRNA(Gln) in organisms which lack either or both of asparaginyl-tRNA or glutaminyl-tRNA synthetases. The reaction takes place in the presence of glutamine and ATP through an activated phospho-Asp-tRNA(Asn) or phospho-Glu-tRNA(Gln). This is Aspartyl/glutamyl-tRNA(Asn/Gln) amidotransferase subunit C from Bradyrhizobium sp. (strain BTAi1 / ATCC BAA-1182).